The primary structure comprises 329 residues: Trans-1,2-dihydrobenzene-1,2-diol dehydrogenase (329 aa).

This sequence belongs to the Gfo/Idh/MocA family. Homodimer. In terms of tissue distribution, lens, liver and small intestine.

It catalyses the reaction (1R,2R)-1,2-dihydrobenzene-1,2-diol + NADP(+) = catechol + NADPH + H(+). It carries out the reaction D-xylose + NADP(+) = D-xylono-1,5-lactone + NADPH + H(+). Stimulated by various salts. In Oryctolagus cuniculus (Rabbit), this protein is Trans-1,2-dihydrobenzene-1,2-diol dehydrogenase (DHDH).